The primary structure comprises 357 residues: Cytosolic Fe-S cluster assembly factor NAR1 (357 aa).

[4Fe-4S] cluster-binding residues include Cys-14, Cys-28, Cys-31, Cys-34, Cys-129, Cys-172, Cys-297, and Cys-301.

The protein belongs to the NARF family.

Its function is as follows. Component of the cytosolic Fe/S protein assembly machinery. May play a role in the transfer of pre-assembled Fe/S clusters to target apoproteins. The sequence is that of Cytosolic Fe-S cluster assembly factor NAR1 (NAR1) from Encephalitozoon cuniculi (strain GB-M1) (Microsporidian parasite).